We begin with the raw amino-acid sequence, 276 residues long: NAD(+)--protein-threonine ADP-ribosyltransferase (276 aa).

Interacts directly with host ubiquitin.

Its subcellular location is the secreted. It is found in the host cell. It carries out the reaction L-threonyl-[protein] + NAD(+) = O-(ADP-D-ribosyl)-L-threonyl-[protein] + nicotinamide + H(+). ADP-ribosyltransferase that specifically modifies host ubiquitin on 'Thr-66' residue, which causes the shutdown of polyubiquitin synthesis and disrupts the recognition and reversal of polyubiquitin in host cells during infection. Threonine ADP-ribosylation of ubiquitin prevents the transfer of ubiquitin from ubiquitin-activating enzyme E1 to ubiquitin-conjugating enzyme E2, which inhibits subsequent ubiquitin activation and leads to the shutdown of polyubiquitin synthesis in host cells. The modification also causes dysfunction of polyubiquitin chains in cells, thereby blocking host ubiquitin signaling. ADP-ribosylation by CteC is likely irreversible. Plays a crucial role in bacterial colonization in mice during infection. This is NAD(+)--protein-threonine ADP-ribosyltransferase from Chromobacterium violaceum (strain ATCC 12472 / DSM 30191 / JCM 1249 / CCUG 213 / NBRC 12614 / NCIMB 9131 / NCTC 9757 / MK).